The following is a 237-amino-acid chain: 3-oxoacyl-[acyl-carrier-protein] reductase (237 aa).

The residue at position 1 (methionine 1) is an N-acetylmethionine. NADP(+) contacts are provided by residues 11 to 14 and 34 to 35; these read SRGI and RN. N6-acetyllysine is present on lysine 40. NADP(+) is bound by residues aspartate 56 and 83 to 85; that span reads AAG. Lysine 96 is subject to N6-acetyllysine. Position 135 (serine 135) interacts with substrate. Residues tyrosine 148, lysine 152, and 181–183 each bind NADP(+); that span reads VHT. The active-site Proton acceptor is tyrosine 148. The residue at position 195 (lysine 195) is an N6-acetyllysine.

Belongs to the short-chain dehydrogenases/reductases (SDR) family. As to quaternary structure, homotetramer (in vitro). Heterotetramer with HSD17B8; contains two molecules each of HSD17B8 and CBR4. Does not form homotetramers when HSD17B8 is coexpressed, only heterotetramers (in vitro). In terms of tissue distribution, detected in liver and kidney (at protein level). Displays the highest expression in neuronal and muscle tissues.

Its subcellular location is the mitochondrion matrix. The catalysed reaction is a (3R)-hydroxyacyl-[ACP] + NADP(+) = a 3-oxoacyl-[ACP] + NADPH + H(+). It catalyses the reaction a quinone + NADPH + H(+) = a quinol + NADP(+). The protein operates within lipid metabolism; fatty acid biosynthesis. Its function is as follows. Component of the heterotetramer complex KAR (3-ketoacyl-[acyl carrier protein] reductase or 3-ketoacyl-[ACP] reductase) that forms part of the mitochondrial fatty acid synthase (mtFAS). Beta-subunit of the KAR heterotetramer complex, responsible for the 3-ketoacyl-ACP reductase activity of the mtFAS, reduces 3-oxoacyl-[ACP] to (3R)-hydroxyacyl-[ACP] in a NADPH-dependent manner with no chain length preference, thereby participating in mitochondrial fatty acid biosynthesis. The homotetramer has NADPH-dependent quinone reductase activity (in vitro), hence could play a role in protection against cytotoxicity of exogenous quinones. As a heterotetramer, it can also reduce 9,10-phenanthrenequinone, 1,4-benzoquinone and various other o-quinones and p-quinones (in vitro). The chain is 3-oxoacyl-[acyl-carrier-protein] reductase (CBR4) from Homo sapiens (Human).